The chain runs to 576 residues: Adenine deaminase 2 (576 aa).

Belongs to the metallo-dependent hydrolases superfamily. Adenine deaminase family. Mn(2+) serves as cofactor.

The enzyme catalyses adenine + H2O + H(+) = hypoxanthine + NH4(+). The chain is Adenine deaminase 2 from Desulfotalea psychrophila (strain LSv54 / DSM 12343).